Here is a 117-residue protein sequence, read N- to C-terminus: Large ribosomal subunit protein bL17 (117 aa).

Belongs to the bacterial ribosomal protein bL17 family. In terms of assembly, part of the 50S ribosomal subunit. Contacts protein L32.

The polypeptide is Large ribosomal subunit protein bL17 (Campylobacter jejuni subsp. jejuni serotype O:6 (strain 81116 / NCTC 11828)).